Here is a 497-residue protein sequence, read N- to C-terminus: Trichoplein keratin filament-binding protein (497 aa).

3 coiled-coil regions span residues 67–140, 166–271, and 327–479; these read HCEK…LLYE, ATQK…ELGR, and MKQV…AKTM. An interaction with keratin proteins region spans residues 72–457; sequence KEEKRKILEL…WEAARQEEEE (386 aa). Residues 167–188 form a disordered region; it reads TQKEEKKQQEATEKQENKRLEN. The segment covering 168 to 188 has biased composition (basic and acidic residues); that stretch reads QKEEKKQQEATEKQENKRLEN. The interval 258–424 is trichohyalin/plectin homology domain; sequence RQMAALRRKT…KQLAQRAKEE (167 aa). Residues 441–497 form a disordered region; that stretch reads AERQGQEWEAARQEEEEEEEARQAEEHSNALLQQEAKTMAEKGYQPKLHGHLRIAWD. Residues 444–453 show a composition bias toward basic and acidic residues; sequence QGQEWEAARQ. The span at 488–497 shows a compositional bias: basic residues; sequence LHGHLRIAWD.

It belongs to the TCHP family. In terms of assembly, interacts specifically with keratin proteins including, KRT5, KRT6A, KRT8, KRT14, KRT16 and KRT18. Interacts with KCTD17. In terms of processing, ubiquitinated. Ubiquitination by the BCR(KCTD17) E3 ubiquitin ligase complex results in proteasomal degradation, and induces ciliogenesis. In terms of tissue distribution, expressed in all tissues examined, including brain, liver, small intestine, large intestine, lung and heart. Found concentrated in tubular structures within hepatocytes, and in the apical cortical region and desmosomes of the apical junctional domain in enterocytes of the small intestine. In the hair follicle, localized at the outer root sheath. Also expressed in blood vessels (at protein level).

The protein resides in the cytoplasm. It localises to the cytoskeleton. The protein localises to the cell membrane. Its subcellular location is the mitochondrion. It is found in the microtubule organizing center. The protein resides in the centrosome. Functionally, tumor suppressor which has the ability to inhibit cell growth and be pro-apoptotic during cell stress. May act as a 'capping' or 'branching' protein for keratin filaments in the cell periphery. May regulate K8/K18 filament and desmosome organization mainly at the apical or peripheral regions of simple epithelial cells. Is a negative regulator of ciliogenesis. The polypeptide is Trichoplein keratin filament-binding protein (Mus musculus (Mouse)).